Consider the following 229-residue polypeptide: Potassium/proton antiporter CemA (229 aa).

A run of 3 helical transmembrane segments spans residues 7 to 27 (FTPL…SLSF), 114 to 134 (IISF…LVIL), and 190 to 210 (ISGL…YWIF).

This sequence belongs to the CemA family.

Its subcellular location is the plastid. It localises to the chloroplast inner membrane. It catalyses the reaction K(+)(in) + H(+)(out) = K(+)(out) + H(+)(in). In terms of biological role, contributes to K(+)/H(+) antiport activity by supporting proton efflux to control proton extrusion and homeostasis in chloroplasts in a light-dependent manner to modulate photosynthesis. Prevents excessive induction of non-photochemical quenching (NPQ) under continuous-light conditions. Indirectly promotes efficient inorganic carbon uptake into chloroplasts. This is Potassium/proton antiporter CemA from Jasminum nudiflorum (Winter jasmine).